A 267-amino-acid chain; its full sequence is Tryptophan synthase alpha chain (267 aa).

Residues Glu51 and Asp62 each act as proton acceptor in the active site.

Belongs to the TrpA family. As to quaternary structure, tetramer of two alpha and two beta chains.

It catalyses the reaction (1S,2R)-1-C-(indol-3-yl)glycerol 3-phosphate + L-serine = D-glyceraldehyde 3-phosphate + L-tryptophan + H2O. It participates in amino-acid biosynthesis; L-tryptophan biosynthesis; L-tryptophan from chorismate: step 5/5. Its function is as follows. The alpha subunit is responsible for the aldol cleavage of indoleglycerol phosphate to indole and glyceraldehyde 3-phosphate. This Prochlorococcus marinus (strain SARG / CCMP1375 / SS120) protein is Tryptophan synthase alpha chain.